We begin with the raw amino-acid sequence, 372 residues long: 3-galactosyl-N-acetylglucosaminide 4-alpha-L-fucosyltransferase FUT3 (372 aa).

Residues 1–15 (MDPLGAAKTQWPWRR) are Cytoplasmic-facing. Residues 16–34 (CLAALLFQLLVAVCFFSYL) form a helical; Signal-anchor for type II membrane protein membrane-spanning segment. Topologically, residues 35 to 372 (RVSRDDATGS…MVRSIAAWFT (338 aa)) are lumenal. The segment at 40 to 68 (DATGSPRPGLMAVEPVTGAPGGSSRQDTT) is disordered. Residues asparagine 165 and asparagine 196 are each glycosylated (N-linked (GlcNAc...) asparagine).

The protein belongs to the glycosyltransferase 10 family. Post-translationally, glycosylated.

The protein resides in the golgi apparatus. The protein localises to the golgi stack membrane. It carries out the reaction a beta-D-galactosyl-(1-&gt;3)-N-acetyl-beta-D-glucosaminyl derivative + GDP-beta-L-fucose = a beta-D-galactosyl-(1-&gt;3)-[alpha-L-fucosyl-(1-&gt;4)]-N-acetyl-beta-D-glucosaminyl derivative + GDP + H(+). The catalysed reaction is an N-acetyl-alpha-neuraminyl-(2-&gt;3)-beta-D-galactosyl-(1-&gt;4)-N-acetyl-beta-D-glucosaminyl derivative + GDP-beta-L-fucose = an alpha-Neu5Ac-(2-&gt;3)-beta-D-Gal-(1-&gt;4)-[alpha-L-Fuc-(1-&gt;3)]-beta-D-GlcNAc derivative + GDP + H(+). It catalyses the reaction a beta-D-galactosyl-(1-&gt;4)-N-acetyl-beta-D-glucosaminyl derivative + GDP-beta-L-fucose = a beta-D-galactosyl-(1-&gt;4)-[alpha-L-fucosyl-(1-&gt;3)]-N-acetyl-beta-D-glucosaminyl derivative + GDP + H(+). The enzyme catalyses an alpha-Neu5Ac-(2-&gt;3)-beta-D-Gal-(1-&gt;4)-beta-D-GlcNAc-(1-&gt;3)-beta-D-Gal-(1-&gt;4)-[alpha-L-Fuc-(1-&gt;3)]-beta-D-GlcNAc derivative + GDP-beta-L-fucose = an alpha-Neu5Ac-(2-&gt;3)-beta-D-Gal-(1-&gt;4)-[alpha-L-Fuc-(1-&gt;3)]-beta-D-GlcNAc-(1-&gt;3)-beta-D-Gal-(1-&gt;4)-[alpha-L-Fuc-(1-&gt;3)]-beta-D-GlcNAc derivative + GDP + H(+). It carries out the reaction Lc4Cer + GDP-beta-L-fucose = a lactoside III(4)-a-Fuc-Lc4Cer + GDP + H(+). The catalysed reaction is a beta-D-Gal-(1-&gt;3)-beta-D-GlcNAc-(1-&gt;3)-beta-D-Gal-(1-&gt;4)-beta-D-Glc-(1&lt;-&gt;1')-Cer(d18:1(4E)) + GDP-beta-L-fucose = a III(4)-a-Fuc-Lc4Cer(d18:1(4E)) + GDP + H(+). It catalyses the reaction N-acetyl-alpha-neuraminosyl-(2-&gt;3)-beta-D-galactosyl-(1-&gt;3)-[N-acetyl-alpha-neuraminosyl-(2-&gt;6)]-N-acetyl-beta-D-glucosaminyl-(1-&gt;3)-beta-D-galactosyl-(1-&gt;4)-beta-D-glucosyl-(1&lt;-&gt;1')-N-acyl-sphing-4-enine + GDP-beta-L-fucose = N-acetyl-alpha-neuraminosyl-(2-&gt;3)-beta-D-galactosyl-(1-&gt;3)-alpha-L-fucosyl-(1-&gt;4)-[N-acetyl-alpha-neuraminosyl-(2-&gt;6)-N-acetyl-beta-D-glucosaminyl-(1-&gt;3)]-beta-D-galactosyl-(1-&gt;4)-beta-D-glucosyl-(1&lt;-&gt;1')-N-acyl-sphing-4-enine + GDP + H(+). The enzyme catalyses N-acetyl-alpha-neuraminosyl-(2-&gt;3)-beta-D-galactosyl-(1-&gt;3)-N-acetyl-beta-D-glucosaminyl-(1-&gt;3)-beta-D-galactosyl-(1-&gt;4)-beta-D-glucosyl-(1&lt;-&gt;1')-N-acyl-sphing-4-enine + GDP-beta-L-fucose = N-acetyl-alpha-neuraminosyl-(2-&gt;3)-beta-D-galactosyl-(1-&gt;3)-alpha-L-fucosyl-(1-&gt;4)-[N-acetyl-beta-D-glucosaminyl-(1-&gt;3)]-beta-D-galactosyl-(1-&gt;4)-beta-D-glucosyl-(1&lt;-&gt;1')-N-acyl-sphing-4-enine + GDP + H(+). It carries out the reaction beta-D-galactosyl-(1-&gt;3)-N-acetyl-D-glucosamine + GDP-beta-L-fucose = beta-D-galactosyl-(1-&gt;3)-[alpha-L-fucosyl-(1-&gt;4)]-N-acetyl-D-glucosamine + GDP + H(+). The catalysed reaction is alpha-L-Fuc-(1-&gt;2)-beta-D-Gal-(1-&gt;3)-D-GlcNAc + GDP-beta-L-fucose = alpha-L-Fuc-(1-&gt;2)-beta-D-Gal-(1-&gt;3)-[alpha-L-Fuc-(1-&gt;4)]-D-GlcNAc + GDP + H(+). It catalyses the reaction alpha-L-Fuc-(1-&gt;2)-beta-D-Gal-(1-&gt;4)-D-GlcNAc + GDP-beta-L-fucose = alpha-L-Fuc-(1-&gt;2)-beta-D-Gal-(1-&gt;4)-[alpha-L-Fuc-(1-&gt;3)]-D-GlcNAc + GDP + H(+). The enzyme catalyses beta-D-galactosyl-(1-&gt;4)-N-acetyl-D-glucosamine + GDP-beta-L-fucose = beta-D-galactosyl-(1-&gt;4)-[alpha-L-fucosyl-(1-&gt;3)]-N-acetyl-D-glucosamine + GDP + H(+). It carries out the reaction lactose + GDP-beta-L-fucose = beta-D-galactosyl-(1-&gt;4)-[alpha-L-fucosyl-(1-&gt;3)]-D-glucose + GDP + H(+). The catalysed reaction is an alpha-Neu5Ac-(2-&gt;3)-beta-D-Gal-(1-&gt;3)-D-GlcNAc derivative + GDP-beta-L-fucose = an alpha-Neu5Ac-(2-&gt;3)-beta-D-Gal-(1-&gt;3)-[alpha-L-Fuc-(1-&gt;4)]-beta-D-GlcNAc derivative + GDP + H(+). It functions in the pathway protein modification; protein glycosylation. Its function is as follows. Catalyzes the transfer of L-fucose, from a guanosine diphosphate-beta-L-fucose, to both the subterminal N-acetyl glucosamine (GlcNAc) of type 1 chain (beta-D-Gal-(1-&gt;3)-beta-D-GlcNAc) glycolipids and oligosaccharides via an alpha(1,4) linkage, and the subterminal glucose (Glc) or GlcNAc of type 2 chain (beta-D-Gal-(1-&gt;4)-beta-D-GlcNAc) oligosaccharides via an alpha(1,3) linkage, independently of the presence of terminal alpha-L-fucosyl-(1,2) moieties on the terminal galactose of these acceptors and participates in the blood groups Lewis determination and expression of Lewis a (Le(a)), lewis b (Le(b)), Lewis x/SSEA-1 (Le(x)) and lewis y (Le(y)) antigens. Also catalyzes the transfer of L-fucose to subterminal GlcNAc of sialyl- and disialyl-lactotetraosylceramide to produce sialyl Lewis a (sLe(a)) and disialyl Lewis a via an alpha(1,4) linkage and therefore may regulate cell surface sialyl Lewis a expression and consequently regulates adhesive properties to E-selectin, cell proliferation and migration. Catalyzes the transfer of an L-fucose to 3'-sialyl-N-acetyllactosamine by an alpha(1,3) linkage, which allows the formation of sialyl-Lewis x structure and therefore may regulate the sialyl-Lewis x surface antigen expression and consequently adhesive properties to E-selectin. Prefers type 1 chain over type 2 acceptors. Type 1 tetrasaccharide is a better acceptor than type 1 disaccharide suggesting that a beta anomeric configuration of GlcNAc in the substrate is preferred. Lewis-positive (Le(+)) individuals have an active enzyme while Lewis-negative (Le(-)) individuals have an inactive enzyme. The chain is 3-galactosyl-N-acetylglucosaminide 4-alpha-L-fucosyltransferase FUT3 from Pongo pygmaeus (Bornean orangutan).